A 283-amino-acid polypeptide reads, in one-letter code: Protein boule-like (283 aa).

Positions 1–25 (MQTDSLSPSPNPVSPVPLNNPTSAP) are disordered. The RRM domain occupies 33–110 (NRIFVGGIDF…KKLNIGPAIR (78 aa)). The 25-residue stretch at 160–184 (PSRSVCSSPVMVAQPIYQQPAYHYQ) folds into the DAZ domain.

This sequence belongs to the RRM DAZ family. As to quaternary structure, interacts with DAZ1 and DAZL. As to expression, testis specific. Not expressed in early embryos, primordial germ cells and spermatogonial cells. First expressed in the cytoplasm of spermatocytes and then persists through meiosis.

Its subcellular location is the cytoplasm. Probable RNA-binding protein, which may be required during spermatogenesis. May act by binding to the 3'-UTR of mRNAs and regulating their translation. The protein is Protein boule-like (BOLL) of Homo sapiens (Human).